We begin with the raw amino-acid sequence, 221 residues long: Histidine biosynthesis bifunctional protein HisIE (221 aa).

A phosphoribosyl-AMP cyclohydrolase region spans residues 1–129; it reads MAYSKNFSIE…AKKTSPFSNI (129 aa). The tract at residues 130–221 is phosphoribosyl-ATP pyrophosphohydrolase; the sequence is CSELFDTLHE…VLESRRGKNN (92 aa).

The protein in the N-terminal section; belongs to the PRA-CH family. This sequence in the C-terminal section; belongs to the PRA-PH family.

It localises to the cytoplasm. It carries out the reaction 1-(5-phospho-beta-D-ribosyl)-ATP + H2O = 1-(5-phospho-beta-D-ribosyl)-5'-AMP + diphosphate + H(+). The catalysed reaction is 1-(5-phospho-beta-D-ribosyl)-5'-AMP + H2O = 1-(5-phospho-beta-D-ribosyl)-5-[(5-phospho-beta-D-ribosylamino)methylideneamino]imidazole-4-carboxamide. It functions in the pathway amino-acid biosynthesis; L-histidine biosynthesis; L-histidine from 5-phospho-alpha-D-ribose 1-diphosphate: step 2/9. Its pathway is amino-acid biosynthesis; L-histidine biosynthesis; L-histidine from 5-phospho-alpha-D-ribose 1-diphosphate: step 3/9. This is Histidine biosynthesis bifunctional protein HisIE from Prochlorococcus marinus subsp. pastoris (strain CCMP1986 / NIES-2087 / MED4).